A 306-amino-acid polypeptide reads, in one-letter code: UDP-3-O-acyl-N-acetylglucosamine deacetylase (306 aa).

Residues His79, His238, and Asp242 each contribute to the Zn(2+) site. The active-site Proton donor is the His265.

Belongs to the LpxC family. Zn(2+) is required as a cofactor.

It carries out the reaction a UDP-3-O-[(3R)-3-hydroxyacyl]-N-acetyl-alpha-D-glucosamine + H2O = a UDP-3-O-[(3R)-3-hydroxyacyl]-alpha-D-glucosamine + acetate. The protein operates within glycolipid biosynthesis; lipid IV(A) biosynthesis; lipid IV(A) from (3R)-3-hydroxytetradecanoyl-[acyl-carrier-protein] and UDP-N-acetyl-alpha-D-glucosamine: step 2/6. In terms of biological role, catalyzes the hydrolysis of UDP-3-O-myristoyl-N-acetylglucosamine to form UDP-3-O-myristoylglucosamine and acetate, the committed step in lipid A biosynthesis. This Shewanella denitrificans (strain OS217 / ATCC BAA-1090 / DSM 15013) protein is UDP-3-O-acyl-N-acetylglucosamine deacetylase.